The following is a 537-amino-acid chain: Bifunctional purine biosynthesis protein PurH (537 aa).

The 151-residue stretch at 8–158 (IPAPDLVPVR…KNHAYVAVVT (151 aa)) folds into the MGS-like domain.

This sequence belongs to the PurH family.

The enzyme catalyses (6R)-10-formyltetrahydrofolate + 5-amino-1-(5-phospho-beta-D-ribosyl)imidazole-4-carboxamide = 5-formamido-1-(5-phospho-D-ribosyl)imidazole-4-carboxamide + (6S)-5,6,7,8-tetrahydrofolate. It carries out the reaction IMP + H2O = 5-formamido-1-(5-phospho-D-ribosyl)imidazole-4-carboxamide. The protein operates within purine metabolism; IMP biosynthesis via de novo pathway; 5-formamido-1-(5-phospho-D-ribosyl)imidazole-4-carboxamide from 5-amino-1-(5-phospho-D-ribosyl)imidazole-4-carboxamide (10-formyl THF route): step 1/1. It participates in purine metabolism; IMP biosynthesis via de novo pathway; IMP from 5-formamido-1-(5-phospho-D-ribosyl)imidazole-4-carboxamide: step 1/1. This chain is Bifunctional purine biosynthesis protein PurH, found in Chelativorans sp. (strain BNC1).